The chain runs to 337 residues: Porphobilinogen deaminase (337 aa).

Cys254 bears the S-(dipyrrolylmethanemethyl)cysteine mark.

This sequence belongs to the HMBS family. Requires dipyrromethane as cofactor.

It carries out the reaction 4 porphobilinogen + H2O = hydroxymethylbilane + 4 NH4(+). It functions in the pathway porphyrin-containing compound metabolism; protoporphyrin-IX biosynthesis; coproporphyrinogen-III from 5-aminolevulinate: step 2/4. Its function is as follows. Tetrapolymerization of the monopyrrole PBG into the hydroxymethylbilane pre-uroporphyrinogen in several discrete steps. The sequence is that of Porphobilinogen deaminase (pda-1) from Neurospora crassa (strain ATCC 24698 / 74-OR23-1A / CBS 708.71 / DSM 1257 / FGSC 987).